A 199-amino-acid chain; its full sequence is Thymidylate kinase (199 aa).

Position 7-14 (Gly7–Thr14) interacts with ATP.

It belongs to the thymidylate kinase family.

The enzyme catalyses dTMP + ATP = dTDP + ADP. Functionally, phosphorylation of dTMP to form dTDP in both de novo and salvage pathways of dTTP synthesis. The protein is Thymidylate kinase of Acinetobacter baumannii (strain ACICU).